The sequence spans 570 residues: Molecular chaperone MKKS (570 aa).

192-199 (GHIILGKS) is a binding site for ATP. Residues 198–370 (KSLIVPLKGQ…FHLIPNEATI (173 aa)) are substrate-binding apical domain.

Belongs to the TCP-1 chaperonin family. In terms of assembly, component of a complex composed at least of MKKS, BBS10, BBS12, TCP1, CCT2, CCT3, CCT4, CCT5 and CCT8. Interacts with STUB1. Interacts with BBS2 (via coiled coil domain). Interacts with CCDC28B. Interacts with BBS12. Interacts with SMARCC1, a component of the SWI/SNF complexes; the interaction takes place predominantly in the cytoplasm and may modulate SMARCC1 location. Interacts with DLEC1.

The protein localises to the cytoplasm. It is found in the cytoskeleton. It localises to the microtubule organizing center. Its subcellular location is the centrosome. The protein resides in the cytosol. The protein localises to the nucleus. In terms of biological role, probable molecular chaperone that assists the folding of proteins upon ATP hydrolysis. Plays a role in the assembly of BBSome, a complex involved in ciliogenesis regulating transports vesicles to the cilia. May play a role in protein processing in limb, cardiac and reproductive system development. May play a role in cytokinesis. The polypeptide is Molecular chaperone MKKS (MKKS) (Pongo abelii (Sumatran orangutan)).